Consider the following 169-residue polypeptide: Large ribosomal subunit protein uL10 (169 aa).

It belongs to the universal ribosomal protein uL10 family. As to quaternary structure, part of the ribosomal stalk of the 50S ribosomal subunit. The N-terminus interacts with L11 and the large rRNA to form the base of the stalk. The C-terminus forms an elongated spine to which L12 dimers bind in a sequential fashion forming a multimeric L10(L12)X complex.

Forms part of the ribosomal stalk, playing a central role in the interaction of the ribosome with GTP-bound translation factors. In Orientia tsutsugamushi (strain Ikeda) (Rickettsia tsutsugamushi), this protein is Large ribosomal subunit protein uL10.